Consider the following 124-residue polypeptide: Large ribosomal subunit protein bL12 (124 aa).

The protein belongs to the bacterial ribosomal protein bL12 family. In terms of assembly, homodimer. Part of the ribosomal stalk of the 50S ribosomal subunit. Forms a multimeric L10(L12)X complex, where L10 forms an elongated spine to which 2 to 4 L12 dimers bind in a sequential fashion. Binds GTP-bound translation factors.

Forms part of the ribosomal stalk which helps the ribosome interact with GTP-bound translation factors. Is thus essential for accurate translation. The chain is Large ribosomal subunit protein bL12 from Aromatoleum aromaticum (strain DSM 19018 / LMG 30748 / EbN1) (Azoarcus sp. (strain EbN1)).